A 196-amino-acid polypeptide reads, in one-letter code: Glycerol-3-phosphate acyltransferase (196 aa).

4 helical membrane-spanning segments follow: residues 5–25 (GLIAFAFGYLLGSIPFGMILT), 70–90 (VVIALLLSGPGAAMAATLGAF), 111–131 (IGVLLGLFWPAALAFCAIWLL), and 152–172 (LLLWGFGHPQFALLFAVLTVL).

The protein belongs to the PlsY family. In terms of assembly, probably interacts with PlsX.

The protein localises to the cell inner membrane. It carries out the reaction an acyl phosphate + sn-glycerol 3-phosphate = a 1-acyl-sn-glycero-3-phosphate + phosphate. It participates in lipid metabolism; phospholipid metabolism. Functionally, catalyzes the transfer of an acyl group from acyl-phosphate (acyl-PO(4)) to glycerol-3-phosphate (G3P) to form lysophosphatidic acid (LPA). This enzyme utilizes acyl-phosphate as fatty acyl donor, but not acyl-CoA or acyl-ACP. In Nitrobacter winogradskyi (strain ATCC 25391 / DSM 10237 / CIP 104748 / NCIMB 11846 / Nb-255), this protein is Glycerol-3-phosphate acyltransferase.